A 192-amino-acid chain; its full sequence is ADP-ribosylation factor-like protein 4C (192 aa).

Gly-2 is lipidated: N-myristoyl glycine. GTP-binding positions include 20 to 27 (GLDSAGKT), 68 to 72 (DVGGQ), and 127 to 130 (NKQD).

It belongs to the small GTPase superfamily. Arf family. As to quaternary structure, interacts with CYTH2. Interacts with alpha tubulin; interaction is independent on the ARL4C GTP or GDP binding status. Expressed in several tumor cell lines (at protein level). Expressed in lung, brain, leukocytes and placenta.

It localises to the cell projection. It is found in the filopodium. The protein localises to the cell membrane. Its subcellular location is the cytoplasm. Its function is as follows. Small GTP-binding protein which cycles between an inactive GDP-bound and an active GTP-bound form, and the rate of cycling is regulated by guanine nucleotide exchange factors (GEF) and GTPase-activating proteins (GAP). GTP-binding protein that does not act as an allosteric activator of the cholera toxin catalytic subunit. May be involved in transport between a perinuclear compartment and the plasma membrane, apparently linked to the ABCA1-mediated cholesterol secretion pathway. Recruits CYTH1, CYTH2, CYTH3 and CYTH4 to the plasma membrane in the GDP-bound form. Regulates the microtubule-dependent intracellular vesicular transport from early endosome to recycling endosome process. The sequence is that of ADP-ribosylation factor-like protein 4C (ARL4C) from Homo sapiens (Human).